Consider the following 96-residue polypeptide: Co-chaperonin GroES (96 aa).

This sequence belongs to the GroES chaperonin family. In terms of assembly, heptamer of 7 subunits arranged in a ring. Interacts with the chaperonin GroEL.

The protein localises to the cytoplasm. Its function is as follows. Together with the chaperonin GroEL, plays an essential role in assisting protein folding. The GroEL-GroES system forms a nano-cage that allows encapsulation of the non-native substrate proteins and provides a physical environment optimized to promote and accelerate protein folding. GroES binds to the apical surface of the GroEL ring, thereby capping the opening of the GroEL channel. In Dechloromonas aromatica (strain RCB), this protein is Co-chaperonin GroES.